The chain runs to 328 residues: tRNA uridine(34) hydroxylase (328 aa).

A Rhodanese domain is found at 130 to 224 (LDEDTVVLDT…YGKDPEVQGE (95 aa)). Cysteine 184 functions as the Cysteine persulfide intermediate in the catalytic mechanism.

It belongs to the TrhO family.

It carries out the reaction uridine(34) in tRNA + AH2 + O2 = 5-hydroxyuridine(34) in tRNA + A + H2O. Catalyzes oxygen-dependent 5-hydroxyuridine (ho5U) modification at position 34 in tRNAs. The protein is tRNA uridine(34) hydroxylase of Streptococcus gordonii (strain Challis / ATCC 35105 / BCRC 15272 / CH1 / DL1 / V288).